The primary structure comprises 294 residues: Nucleoside-specific channel-forming protein Tsx (294 aa).

Residues 1–22 form the signal peptide; it reads MKKTLLAAGAVLALSSSFTVNA.

The protein belongs to the nucleoside-specific channel-forming outer membrane porin (Tsx) (TC 1.B.10) family.

Its subcellular location is the cell outer membrane. Its function is as follows. Functions as a substrate-specific channel for nucleosides and deoxynucleosides. This Escherichia coli O157:H7 protein is Nucleoside-specific channel-forming protein Tsx (tsx).